The primary structure comprises 452 residues: Selenide, water dikinase 2 (452 aa).

A2 is modified (N-acetylalanine). Residue S49 is modified to Phosphoserine. U63 is an active-site residue. Position 63 (U63) is a non-standard amino acid, selenocysteine. Residue K66 participates in ATP binding. A disordered region spans residues P86–P111. Positions G95–L105 are enriched in low complexity. Residues G121–D123, D141, D164, and G215–T218 each bind ATP. D123 lines the Mg(2+) pocket. Mg(2+) is bound at residue D164. Residue D319 participates in Mg(2+) binding.

It belongs to the selenophosphate synthase 1 family. Class I subfamily. In terms of assembly, homodimer. The cofactor is Mg(2+). Truncated SEPHS2 proteins produced by failed UGA/Sec decoding are ubiquitinated by the CRL2(KLHDC3) complex, which recognizes the glycine (Gly) at the C-terminus of truncated SEPHS2 proteins.

The catalysed reaction is hydrogenselenide + ATP + H2O = selenophosphate + AMP + phosphate + 2 H(+). Synthesizes selenophosphate from selenide and ATP. This is Selenide, water dikinase 2 (Sephs2) from Mus musculus (Mouse).